The chain runs to 281 residues: Phosphatidylglycerol--prolipoprotein diacylglyceryl transferase (281 aa).

The next 4 helical transmembrane spans lie at 29–49 (FYSLAYIVGIVLAYWHLGKMI), 64–84 (LFFYCTLGVIFGGRIGYVLFY), 100–120 (GGMSFHGGVIGVVLAILFVSW), and 124–144 (LNWLRVCDYIAVNVPFGMFLG). Arg-145 provides a ligand contact to a 1,2-diacyl-sn-glycero-3-phospho-(1'-sn-glycerol). 3 consecutive transmembrane segments (helical) span residues 180–200 (QLYQAGLEGLLMMAVMLLLFW), 209–229 (GVLVGVFTIGIAGARFVNEFF), and 248–268 (GQWLSIPMILVGLAVVVYALT).

It belongs to the Lgt family.

The protein resides in the cell inner membrane. The catalysed reaction is L-cysteinyl-[prolipoprotein] + a 1,2-diacyl-sn-glycero-3-phospho-(1'-sn-glycerol) = an S-1,2-diacyl-sn-glyceryl-L-cysteinyl-[prolipoprotein] + sn-glycerol 1-phosphate + H(+). It participates in protein modification; lipoprotein biosynthesis (diacylglyceryl transfer). Functionally, catalyzes the transfer of the diacylglyceryl group from phosphatidylglycerol to the sulfhydryl group of the N-terminal cysteine of a prolipoprotein, the first step in the formation of mature lipoproteins. The chain is Phosphatidylglycerol--prolipoprotein diacylglyceryl transferase from Erythrobacter litoralis (strain HTCC2594).